The chain runs to 353 residues: Photosystem II protein D1 (353 aa).

N-acetylthreonine is present on Thr2. Thr2 carries the post-translational modification Phosphothreonine. 3 consecutive transmembrane segments (helical) span residues 29–46 (YIGW…TATS), 118–133 (HFLL…EWEL), and 142–156 (WIAV…AATA). His118 is a binding site for chlorophyll a. Tyr126 lines the pheophytin a pocket. The [CaMn4O5] cluster site is built by Asp170 and Glu189. A helical membrane pass occupies residues 197 to 218 (FHMLGVAGVFGGSLFSAMHGSL). His198 provides a ligand contact to chlorophyll a. Residues His215 and 264–265 (SF) contribute to the a quinone site. Residue His215 coordinates Fe cation. A Fe cation-binding site is contributed by His272. The chain crosses the membrane as a helical span at residues 274–288 (FLAAWPVVGIWFTAL). [CaMn4O5] cluster-binding residues include His332, Glu333, Asp342, and Ala344. Positions 345 to 353 (SVEAPSVNA) are excised as a propeptide.

It belongs to the reaction center PufL/M/PsbA/D family. As to quaternary structure, PSII is composed of 1 copy each of membrane proteins PsbA, PsbB, PsbC, PsbD, PsbE, PsbF, PsbH, PsbI, PsbJ, PsbK, PsbL, PsbM, PsbT, PsbX, PsbY, PsbZ, Psb30/Ycf12, at least 3 peripheral proteins of the oxygen-evolving complex and a large number of cofactors. It forms dimeric complexes. It depends on The D1/D2 heterodimer binds P680, chlorophylls that are the primary electron donor of PSII, and subsequent electron acceptors. It shares a non-heme iron and each subunit binds pheophytin, quinone, additional chlorophylls, carotenoids and lipids. D1 provides most of the ligands for the Mn4-Ca-O5 cluster of the oxygen-evolving complex (OEC). There is also a Cl(-1) ion associated with D1 and D2, which is required for oxygen evolution. The PSII complex binds additional chlorophylls, carotenoids and specific lipids. as a cofactor. Post-translationally, tyr-161 forms a radical intermediate that is referred to as redox-active TyrZ, YZ or Y-Z. C-terminally processed by CTPA; processing is essential to allow assembly of the oxygen-evolving complex and thus photosynthetic growth.

It is found in the plastid. The protein resides in the chloroplast thylakoid membrane. It carries out the reaction 2 a plastoquinone + 4 hnu + 2 H2O = 2 a plastoquinol + O2. Functionally, photosystem II (PSII) is a light-driven water:plastoquinone oxidoreductase that uses light energy to abstract electrons from H(2)O, generating O(2) and a proton gradient subsequently used for ATP formation. It consists of a core antenna complex that captures photons, and an electron transfer chain that converts photonic excitation into a charge separation. The D1/D2 (PsbA/PsbD) reaction center heterodimer binds P680, the primary electron donor of PSII as well as several subsequent electron acceptors. This Oltmannsiellopsis viridis (Marine flagellate) protein is Photosystem II protein D1.